The following is a 211-amino-acid chain: Ribosomal RNA small subunit methyltransferase G (211 aa).

S-adenosyl-L-methionine contacts are provided by residues Gly76, Leu81, 127-128 (VE), and Arg142.

It belongs to the methyltransferase superfamily. RNA methyltransferase RsmG family.

The protein resides in the cytoplasm. It carries out the reaction guanosine(527) in 16S rRNA + S-adenosyl-L-methionine = N(7)-methylguanosine(527) in 16S rRNA + S-adenosyl-L-homocysteine. Specifically methylates the N7 position of guanine in position 527 of 16S rRNA. This chain is Ribosomal RNA small subunit methyltransferase G, found in Vibrio campbellii (strain ATCC BAA-1116).